The sequence spans 576 residues: Proline--tRNA ligase (576 aa).

It belongs to the class-II aminoacyl-tRNA synthetase family. ProS type 1 subfamily. As to quaternary structure, homodimer.

It is found in the cytoplasm. The enzyme catalyses tRNA(Pro) + L-proline + ATP = L-prolyl-tRNA(Pro) + AMP + diphosphate. Its function is as follows. Catalyzes the attachment of proline to tRNA(Pro) in a two-step reaction: proline is first activated by ATP to form Pro-AMP and then transferred to the acceptor end of tRNA(Pro). As ProRS can inadvertently accommodate and process non-cognate amino acids such as alanine and cysteine, to avoid such errors it has two additional distinct editing activities against alanine. One activity is designated as 'pretransfer' editing and involves the tRNA(Pro)-independent hydrolysis of activated Ala-AMP. The other activity is designated 'posttransfer' editing and involves deacylation of mischarged Ala-tRNA(Pro). The misacylated Cys-tRNA(Pro) is not edited by ProRS. This is Proline--tRNA ligase from Bordetella pertussis (strain Tohama I / ATCC BAA-589 / NCTC 13251).